The sequence spans 348 residues: Fructose-1,6-bisphosphatase class 1 (348 aa).

Positions 104, 126, 128, and 129 each coordinate Mg(2+). Residues 129-132 (DGSS), asparagine 221, tyrosine 249, and lysine 279 each bind substrate. Glutamate 285 provides a ligand contact to Mg(2+).

This sequence belongs to the FBPase class 1 family. In terms of assembly, homotetramer. It depends on Mg(2+) as a cofactor.

The protein resides in the cytoplasm. It carries out the reaction beta-D-fructose 1,6-bisphosphate + H2O = beta-D-fructose 6-phosphate + phosphate. The protein operates within carbohydrate biosynthesis; Calvin cycle. The sequence is that of Fructose-1,6-bisphosphatase class 1 from Thermosynechococcus vestitus (strain NIES-2133 / IAM M-273 / BP-1).